Consider the following 504-residue polypeptide: uncharacterized protein (504 aa).

Residues 26–46 (ILFLLLGLIILVNISINVTTV) form a helical membrane-spanning segment. A compositionally biased stretch (polar residues) spans 103–112 (PTQCSSSSTH). Disordered regions lie at residues 103-180 (PTQC…TRPM), 313-402 (YDAR…PLTT), and 431-504 (QRLA…GKLN). Residues 113–128 (YFRKHSNDRRSRRRYC) are compositionally biased toward basic residues. Polar residues predominate over residues 135-147 (QIRQSNQQQSCHS). The span at 313–324 (YDARDQWRRGTE) shows a compositional bias: basic and acidic residues. Residues 349-377 (SSQAHRQNFPSYTHSQPNHSPPQSVGYSS) show a composition bias toward polar residues. 2 stretches are compositionally biased toward basic and acidic residues: residues 378–389 (RESHEVRRRAPD) and 467–478 (LELKRQVQENRG). A compositionally biased stretch (basic residues) spans 494 to 504 (SLHRSRTGKLN).

It is found in the membrane. This is an uncharacterized protein from Rattus norvegicus (Rat).